The following is a 125-amino-acid chain: Large ribosomal subunit protein bL12 (125 aa).

The protein belongs to the bacterial ribosomal protein bL12 family. As to quaternary structure, homodimer. Part of the ribosomal stalk of the 50S ribosomal subunit. Forms a multimeric L10(L12)X complex, where L10 forms an elongated spine to which 2 to 4 L12 dimers bind in a sequential fashion. Binds GTP-bound translation factors.

In terms of biological role, forms part of the ribosomal stalk which helps the ribosome interact with GTP-bound translation factors. Is thus essential for accurate translation. This chain is Large ribosomal subunit protein bL12, found in Campylobacter lari (strain RM2100 / D67 / ATCC BAA-1060).